Here is a 235-residue protein sequence, read N- to C-terminus: MKKLSKRMTALSTKIEDRTYAPLEALAIIKENANAKFDETIEAHIRLGIDPKYTDQQLRTTVALPHGTGQSIKIAVITSGENVAKAKSAGADLFGEEDLVESINKGNMDFDLLIATPDMMPKVAKLGRVLGPRGLMPNPKAGTVTSDIASAIKEFKAGKLEFRADKAGIVHVRFGKASFTENALFENLKTLQESIDKNKPSGAKGKYWKTFYVTSTMGPSVQVDINALQDYQPES.

The protein belongs to the universal ribosomal protein uL1 family. Part of the 50S ribosomal subunit.

Its function is as follows. Binds directly to 23S rRNA. The L1 stalk is quite mobile in the ribosome, and is involved in E site tRNA release. Functionally, protein L1 is also a translational repressor protein, it controls the translation of the L11 operon by binding to its mRNA. This Prochlorococcus marinus (strain MIT 9515) protein is Large ribosomal subunit protein uL1.